A 142-amino-acid chain; its full sequence is Large ribosomal subunit protein uL11 (142 aa).

It belongs to the universal ribosomal protein uL11 family. As to quaternary structure, part of the ribosomal stalk of the 50S ribosomal subunit. Interacts with L10 and the large rRNA to form the base of the stalk. L10 forms an elongated spine to which L12 dimers bind in a sequential fashion forming a multimeric L10(L12)X complex. One or more lysine residues are methylated.

Functionally, forms part of the ribosomal stalk which helps the ribosome interact with GTP-bound translation factors. The chain is Large ribosomal subunit protein uL11 from Dichelobacter nodosus (strain VCS1703A).